Here is a 68-residue protein sequence, read N- to C-terminus: MAKNLVPSDAKLEITQIKGVIGVKQNQRETLRSLGLKRIGHTVVRSADAVTVGMLNTVPHLVNVEEAK.

The protein belongs to the universal ribosomal protein uL30 family. As to quaternary structure, part of the 50S ribosomal subunit.

The polypeptide is Large ribosomal subunit protein uL30 (Pseudarthrobacter chlorophenolicus (strain ATCC 700700 / DSM 12829 / CIP 107037 / JCM 12360 / KCTC 9906 / NCIMB 13794 / A6) (Arthrobacter chlorophenolicus)).